We begin with the raw amino-acid sequence, 965 residues long: Forespore membrane adapter protein MUG56 (965 aa).

The segment at 70 to 175 is disordered; it reads SFLMHKSTDE…VQNSNSTSTS (106 aa). The span at 82 to 101 shows a compositional bias: polar residues; it reads DTPSNLDSPSTQNVGSTNNT. A compositionally biased stretch (low complexity) spans 102–114; the sequence is RASQSLLRRSSSF. A compositionally biased stretch (polar residues) spans 124–158; the sequence is THASTDNNPFSESSTLQPQTAERTSQQAVRSAITE. A compositionally biased stretch (low complexity) spans 159-175; that stretch reads TTNPSVSVQNSNSTSTS. 2 consecutive PH domains span residues 562–737 and 800–961; these read PTPV…EVAS and VIRM…KEIN.

This sequence belongs to the SPO71 family.

The protein resides in the cytoplasm. Its subcellular location is the nucleus. It localises to the prospore membrane. Functionally, may recruit a lipid transfer protein to the forespore membrane during sporulation, thereby aiding forespore membrane formation. Required for meiosis. The sequence is that of Forespore membrane adapter protein MUG56 from Schizosaccharomyces pombe (strain 972 / ATCC 24843) (Fission yeast).